The chain runs to 48 residues: ASCKCDDDGPDVRSATFTGTVDFWNCNEGWEKCTAVYTPVASCCRKKK.

Disulfide bonds link Cys-3/Cys-43, Cys-5/Cys-33, and Cys-26/Cys-44.

It belongs to the sea anemone sodium channel inhibitory toxin family. Type II subfamily.

The protein localises to the secreted. Its subcellular location is the nematocyst. In terms of biological role, binds specifically to voltage-gated sodium channels (Nav), thereby delaying their inactivation during signal transduction. Its toxicity is weaker than that of RpIII (AC P08380). The polypeptide is Delta-stichotoxin-Hmg4a (Heteractis magnifica (Magnificent sea anemone)).